The following is a 634-amino-acid chain: Chaperone protein HtpG (634 aa).

Residues 1-342 (MTVETDKQTL…SSDLSLNVSR (342 aa)) are a; substrate-binding. The tract at residues 343 to 559 (EILQSGPVVD…QGDLGLQMRQ (217 aa)) is b. The c stretch occupies residues 560–634 (LLEASGQAVP…LNKLLLELSV (75 aa)).

It belongs to the heat shock protein 90 family. Homodimer.

The protein resides in the cytoplasm. Functionally, molecular chaperone. Has ATPase activity. The chain is Chaperone protein HtpG from Xanthomonas euvesicatoria pv. vesicatoria (strain 85-10) (Xanthomonas campestris pv. vesicatoria).